The following is a 175-amino-acid chain: Large ribosomal subunit protein uL18 (175 aa).

Belongs to the universal ribosomal protein uL18 family. Part of the 50S ribosomal subunit. Contacts the 5S and 23S rRNAs.

In terms of biological role, this is one of the proteins that bind and probably mediate the attachment of the 5S RNA into the large ribosomal subunit, where it forms part of the central protuberance. The polypeptide is Large ribosomal subunit protein uL18 (Methanospirillum hungatei JF-1 (strain ATCC 27890 / DSM 864 / NBRC 100397 / JF-1)).